The chain runs to 1388 residues: DNA-directed RNA polymerase subunit beta' (1388 aa).

Zn(2+)-binding residues include C70, C72, C85, and C88. 3 residues coordinate Mg(2+): D461, D463, and D465. Zn(2+) contacts are provided by C808, C882, C889, and C892.

This sequence belongs to the RNA polymerase beta' chain family. The RNAP catalytic core consists of 2 alpha, 1 beta, 1 beta' and 1 omega subunit. When a sigma factor is associated with the core the holoenzyme is formed, which can initiate transcription. Requires Mg(2+) as cofactor. It depends on Zn(2+) as a cofactor.

The enzyme catalyses RNA(n) + a ribonucleoside 5'-triphosphate = RNA(n+1) + diphosphate. DNA-dependent RNA polymerase catalyzes the transcription of DNA into RNA using the four ribonucleoside triphosphates as substrates. The chain is DNA-directed RNA polymerase subunit beta' from Acidiphilium cryptum (strain JF-5).